A 314-amino-acid polypeptide reads, in one-letter code: tRNA dimethylallyltransferase (314 aa).

12 to 19 contributes to the ATP binding site; sequence GPTASGKT. Residue 14-19 coordinates substrate; the sequence is TASGKT. 2 interaction with substrate tRNA regions span residues 37-40 and 162-166; these read DSAL and QRIIR.

This sequence belongs to the IPP transferase family. Monomer. Mg(2+) serves as cofactor.

The enzyme catalyses adenosine(37) in tRNA + dimethylallyl diphosphate = N(6)-dimethylallyladenosine(37) in tRNA + diphosphate. Catalyzes the transfer of a dimethylallyl group onto the adenine at position 37 in tRNAs that read codons beginning with uridine, leading to the formation of N6-(dimethylallyl)adenosine (i(6)A). In Acinetobacter baumannii (strain AB0057), this protein is tRNA dimethylallyltransferase.